Here is a 309-residue protein sequence, read N- to C-terminus: Testis-expressed protein 264 homolog (309 aa).

The Lumenal portion of the chain corresponds to Met-1–Asp-3. The helical; Signal-anchor for type III membrane protein transmembrane segment at Leu-4–Phe-24 threads the bilayer. Residues Ala-25–Glu-309 lie on the Cytoplasmic side of the membrane. The segment at Pro-193–Glu-309 is disordered. The segment covering Ala-208 to Ser-225 has biased composition (low complexity). Residues Ser-238 and Ser-243 each carry the phosphoserine modification. Over residues Gly-250–Tyr-262 the composition is skewed to basic and acidic residues. The segment covering Ser-263 to Phe-272 has biased composition (low complexity). The short motif at Phe-272–Leu-275 is the LIR motif element.

As to quaternary structure, interacts (via the LIR motif) with ATG8 family proteins MAP1LC3A, MAP1LC3B, GABARAP and GABARAPL1. Interacts with VCP/p97; bridging VCP/p97 to covalent DNA-protein cross-links (DPCs). Interacts with TOP1 (when sumoylated).

The protein resides in the endoplasmic reticulum membrane. It localises to the cytoplasmic vesicle. Its subcellular location is the autophagosome. The protein localises to the cytoplasm. It is found in the cytosol. The protein resides in the nucleus. It localises to the chromosome. In terms of biological role, major reticulophagy (also called ER-phagy) receptor that acts independently of other candidate reticulophagy receptors to remodel subdomains of the endoplasmic reticulum into autophagosomes upon nutrient stress, which then fuse with lysosomes for endoplasmic reticulum turnover. The ATG8-containing isolation membrane (IM) cradles a tubular segment of TEX264-positive ER near a three-way junction, allowing the formation of a synapse of 2 juxtaposed membranes with trans interaction between the TEX264 and ATG8 proteins. Expansion of the IM would extend the capture of ER, possibly through a 'zipper-like' process involving continued trans TEX264-ATG8 interactions, until poorly understood mechanisms lead to the fission of relevant membranes and, ultimately, autophagosomal membrane closure. Also involved in the repair of covalent DNA-protein cross-links (DPCs) during DNA synthesis: acts by bridging VCP/p97 to covalent DNA-protein cross-links (DPCs) and initiating resolution of DPCs by SPRTN. This chain is Testis-expressed protein 264 homolog, found in Mus musculus (Mouse).